Consider the following 110-residue polypeptide: Serum amyloid A protein (110 aa).

Residues 73–110 (GGSGRGAEDSRADQAANEWGRSGKDPNHFRPHGLPDKY) are disordered. Basic and acidic residues predominate over residues 93 to 110 (RSGKDPNHFRPHGLPDKY).

Belongs to the SAA family. In terms of processing, this protein is the precursor of amyloid protein A, which is formed by the removal of residues from the C-terminal end. Expressed by the liver; secreted in plasma.

In terms of biological role, major acute phase reactant. Apolipoprotein of the HDL complex. In Equus caballus (Horse), this protein is Serum amyloid A protein (SAA1).